The sequence spans 191 residues: Fe/S biogenesis protein NfuA (191 aa).

[4Fe-4S] cluster-binding residues include C149 and C152.

This sequence belongs to the NfuA family. In terms of assembly, homodimer. It depends on [4Fe-4S] cluster as a cofactor.

Functionally, involved in iron-sulfur cluster biogenesis. Binds a 4Fe-4S cluster, can transfer this cluster to apoproteins, and thereby intervenes in the maturation of Fe/S proteins. Could also act as a scaffold/chaperone for damaged Fe/S proteins. The protein is Fe/S biogenesis protein NfuA of Sodalis glossinidius (strain morsitans).